The primary structure comprises 396 residues: Phosphoglycerate kinase (396 aa).

Substrate contacts are provided by residues 21–23, Arg36, 59–62, Arg119, and Arg156; these read DFN and HLGK. ATP-binding positions include Lys206, Gly294, Glu325, and 352–355; that span reads GGDS.

Belongs to the phosphoglycerate kinase family. Monomer.

The protein resides in the cytoplasm. The enzyme catalyses (2R)-3-phosphoglycerate + ATP = (2R)-3-phospho-glyceroyl phosphate + ADP. The protein operates within carbohydrate degradation; glycolysis; pyruvate from D-glyceraldehyde 3-phosphate: step 2/5. The protein is Phosphoglycerate kinase of Listeria monocytogenes serotype 4a (strain HCC23).